Reading from the N-terminus, the 186-residue chain is Alkyl hydroperoxide reductase AhpD (186 aa).

The Proton donor role is filled by Cys-132. Cysteines 132 and 135 form a disulfide. The active-site Cysteine sulfenic acid (-SOH) intermediate is Cys-135.

Belongs to the AhpD family.

The catalysed reaction is N(6)-[(R)-dihydrolipoyl]-L-lysyl-[lipoyl-carrier protein] + a hydroperoxide = N(6)-[(R)-lipoyl]-L-lysyl-[lipoyl-carrier protein] + an alcohol + H2O. In terms of biological role, antioxidant protein with alkyl hydroperoxidase activity. Required for the reduction of the AhpC active site cysteine residues and for the regeneration of the AhpC enzyme activity. The sequence is that of Alkyl hydroperoxide reductase AhpD from Anaeromyxobacter dehalogenans (strain 2CP-1 / ATCC BAA-258).